A 271-amino-acid polypeptide reads, in one-letter code: Gap junction beta-5 protein (271 aa).

Topologically, residues 1–20 (MNWSVFEGLLSGVNKYSTAF) are cytoplasmic. Residues 21–40 (GRIWLSLVFVFRVLVYLVTA) form a helical membrane-spanning segment. The Extracellular portion of the chain corresponds to 41-75 (ERVWGDDQKDFDCNTRQPGCTNVCYDEFFPVSHVR). A helical membrane pass occupies residues 76-98 (LWALQLILVTCPSLLVVMHVAYR). Residues 99-124 (KAREKKYQQEVGKGYLYPNPGKKRGG) are Cytoplasmic-facing. The helical transmembrane segment at 125 to 147 (LWWTYVCSLLFKATIDIIFLYLF) threads the bilayer. Residues 148–182 (HAFYPRYTLPSMVKCHSAPCPNTVDCFIAKPSEKN) are Extracellular-facing. A helical membrane pass occupies residues 183–205 (IFIVFMLVTAIVCILLNLVELLY). Residues 206 to 271 (LVIKRCSECA…PRAHVKKTIL (66 aa)) lie on the Cytoplasmic side of the membrane. The interval 217 to 237 (AKRPPTAHAKNDPNWANPSSK) is disordered.

Belongs to the connexin family. Beta-type (group I) subfamily. As to quaternary structure, a connexon is composed of a hexamer of connexins. In terms of tissue distribution, expressed in skin.

The protein localises to the cell membrane. The protein resides in the cell junction. Its subcellular location is the gap junction. In terms of biological role, one gap junction consists of a cluster of closely packed pairs of transmembrane channels, the connexons, through which materials of low MW diffuse from one cell to a neighboring cell. This is Gap junction beta-5 protein (Gjb5) from Rattus norvegicus (Rat).